We begin with the raw amino-acid sequence, 191 residues long: Protein YceI (191 aa).

A signal peptide spans 1-22 (MKKSLLGLTFASLMFSAGSAVA).

It belongs to the UPF0312 family. Type 1 subfamily.

It localises to the periplasm. In Escherichia coli O17:K52:H18 (strain UMN026 / ExPEC), this protein is Protein YceI.